Reading from the N-terminus, the 212-residue chain is Thymidylate kinase (212 aa).

Position 10 to 17 (10 to 17 (GGEGSGKT)) interacts with ATP.

The protein belongs to the thymidylate kinase family.

It catalyses the reaction dTMP + ATP = dTDP + ADP. Functionally, phosphorylation of dTMP to form dTDP in both de novo and salvage pathways of dTTP synthesis. The polypeptide is Thymidylate kinase (Marinomonas sp. (strain MWYL1)).